Reading from the N-terminus, the 411-residue chain is Trigger factor (411 aa).

In terms of domain architecture, PPIase FKBP-type spans 162 to 240 (EDLVVIDYTT…IKEVKRRQNI (79 aa)).

The protein belongs to the FKBP-type PPIase family. Tig subfamily.

Its subcellular location is the cytoplasm. It carries out the reaction [protein]-peptidylproline (omega=180) = [protein]-peptidylproline (omega=0). In terms of biological role, involved in protein export. Acts as a chaperone by maintaining the newly synthesized protein in an open conformation. Functions as a peptidyl-prolyl cis-trans isomerase. The polypeptide is Trigger factor (Thermodesulfovibrio yellowstonii (strain ATCC 51303 / DSM 11347 / YP87)).